A 495-amino-acid polypeptide reads, in one-letter code: Glycerol kinase (495 aa).

Residue T13 participates in ADP binding. ATP is bound by residues T13, T14, and S15. T13 provides a ligand contact to sn-glycerol 3-phosphate. Residue R17 coordinates ADP. Sn-glycerol 3-phosphate is bound by residues R83, E84, Y135, and D244. Positions 83, 84, 135, 244, and 245 each coordinate glycerol. ADP is bound by residues T266 and G309. The ATP site is built by T266, G309, Q313, and G410. The ADP site is built by G410 and N414.

The protein belongs to the FGGY kinase family.

The catalysed reaction is glycerol + ATP = sn-glycerol 3-phosphate + ADP + H(+). Its pathway is polyol metabolism; glycerol degradation via glycerol kinase pathway; sn-glycerol 3-phosphate from glycerol: step 1/1. With respect to regulation, inhibited by fructose 1,6-bisphosphate (FBP). Functionally, key enzyme in the regulation of glycerol uptake and metabolism. Catalyzes the phosphorylation of glycerol to yield sn-glycerol 3-phosphate. This Shewanella amazonensis (strain ATCC BAA-1098 / SB2B) protein is Glycerol kinase.